The following is a 475-amino-acid chain: UDP-N-acetylmuramate--L-alanine ligase (475 aa).

112-118 (GTHGKTT) provides a ligand contact to ATP.

This sequence belongs to the MurCDEF family.

It is found in the cytoplasm. The catalysed reaction is UDP-N-acetyl-alpha-D-muramate + L-alanine + ATP = UDP-N-acetyl-alpha-D-muramoyl-L-alanine + ADP + phosphate + H(+). It functions in the pathway cell wall biogenesis; peptidoglycan biosynthesis. Cell wall formation. This chain is UDP-N-acetylmuramate--L-alanine ligase, found in Cupriavidus pinatubonensis (strain JMP 134 / LMG 1197) (Cupriavidus necator (strain JMP 134)).